The primary structure comprises 535 residues: MAYLLREGTQRSTGNEVILNNIAVAKILLEMLKSSLGPKGLDKMLVEGQDVTITNDGATIVKNMEVQHPTAKLLIETAKTVDTEVGDGTTSVVVLAGLLLEKAEDLLNQKIHPTVIIEGYRKALNSSLELLKNIADKISPEDRKIVHDLVYTTLSSKFFSTEHTLEKIINLVIDASLAVLDKRDGSYDLDIKNIKIVKVNGGEFDDSELINGIVVDKEPTNENMPKRVENVKVMLADFPLKLEKTEISMKLGISDPTQIKGYLDEQTAYVKQMVDKIKAMGVKLFITQKDIDEIASYLMGKNGIMALKNVKRSDIELLSRATGAKIASSMKDANESDLGEAKLVEVRNLGKNKYLFIQSDKAKAVTVIIKGSNNMITDEAERSLNDAFNSIRNLLLEPYIVAGGGAVEEELAKRLRDDARKVIGKEQLAFNAFADALEEYVSILSETAGMDPISALTEIRHKHATGLKNAGIDVTKARIYDNMLELRVIDSLKVKEQVLKSATEAATAILKIDDMIAAAPAKQQPQPQQPNPYLG.

This sequence belongs to the TCP-1 chaperonin family. Forms a Heterooligomeric complex of two stacked eight-membered rings.

Molecular chaperone; binds unfolded polypeptides in vitro, and has a weak ATPase activity. The protein is Thermosome subunit gamma (thsC) of Saccharolobus solfataricus (strain ATCC 35092 / DSM 1617 / JCM 11322 / P2) (Sulfolobus solfataricus).